Here is an 82-residue protein sequence, read N- to C-terminus: MAEPTMDSLLARINELAHKNKTDGLTDEETAERDHLRKQYLKLFRESFRSQVEMMQVYDKAGKEVTPEKVRQIQRDKGLRDD.

The protein belongs to the UPF0291 family.

The protein resides in the cytoplasm. In Levilactobacillus brevis (strain ATCC 367 / BCRC 12310 / CIP 105137 / JCM 1170 / LMG 11437 / NCIMB 947 / NCTC 947) (Lactobacillus brevis), this protein is UPF0291 protein LVIS_1359.